We begin with the raw amino-acid sequence, 647 residues long: C2H2 finger domain transcription factor USV101 (647 aa).

The span at 1–10 (MSFVAPDDRA) shows a compositional bias: basic and acidic residues. The interval 1–132 (MSFVAPDDRA…ATGYTPDGQP (132 aa)) is disordered. Polar residues-rich tracts occupy residues 27–54 (ESTS…SPNQ) and 66–84 (SSHS…STAY). Over residues 97-122 (PTQQQQQQQSEQHIPSPPSSSNRPPS) the composition is skewed to low complexity. 2 C2H2-type zinc fingers span residues 144–169 (FRCR…VRKH) and 175–197 (FPCH…ATVH). A disordered region spans residues 220-647 (QRASREQRRR…VKQQDDKKTQ (428 aa)). Residues 222 to 248 (ASREQRRRGEVVEVPKGAVERRRETRK) show a composition bias toward basic and acidic residues. Low complexity predominate over residues 249-259 (AQAAAAQAAAA). Residues 261-278 (GHSQQNSPYAQYHESQWN) are compositionally biased toward polar residues. 3 stretches are compositionally biased toward low complexity: residues 312 to 327 (SSSA…YDSA), 404 to 414 (HGAYPPHDAAA), and 421 to 434 (GYYH…GSYP). Over residues 504-515 (RAEDDFGKDDRK) the composition is skewed to basic and acidic residues. Residues 521-540 (SPSNSQVPDSSTAAHANGAH) are compositionally biased toward low complexity. A compositionally biased stretch (basic and acidic residues) spans 628 to 647 (VDKEREKKEEVKQQDDKKTQ).

The protein resides in the nucleus. Its subcellular location is the cytoplasm. Its function is as follows. Transcription factor that promotes pheromone gene expression, which results in a subsequent increase in cell fusion. Also promotes production of melanin and capsule and thereby is required for full virulence. This Cryptococcus neoformans var. grubii serotype A (strain H99 / ATCC 208821 / CBS 10515 / FGSC 9487) (Filobasidiella neoformans var. grubii) protein is C2H2 finger domain transcription factor USV101.